We begin with the raw amino-acid sequence, 179 residues long: Large ribosomal subunit protein uL5 (179 aa).

Belongs to the universal ribosomal protein uL5 family. In terms of assembly, part of the 50S ribosomal subunit; part of the 5S rRNA/L5/L18/L25 subcomplex. Contacts the 5S rRNA and the P site tRNA. Forms a bridge to the 30S subunit in the 70S ribosome.

Functionally, this is one of the proteins that bind and probably mediate the attachment of the 5S RNA into the large ribosomal subunit, where it forms part of the central protuberance. In the 70S ribosome it contacts protein S13 of the 30S subunit (bridge B1b), connecting the 2 subunits; this bridge is implicated in subunit movement. Contacts the P site tRNA; the 5S rRNA and some of its associated proteins might help stabilize positioning of ribosome-bound tRNAs. This is Large ribosomal subunit protein uL5 from Thermoanaerobacter sp. (strain X514).